We begin with the raw amino-acid sequence, 379 residues long: MSEFLPFSRPAMGVEELAAVKEVLESGWITTGPKNHALEQAFCQLTGNQHAIAVSSATAGMHITLMALEIGKGDEVITPSLTWVSTLNMISLQGATPVMVDVDRDTLMVTPEAIESAITPRTKAIIPVHYAGAPADINAIRAIGERYGIAVIEDAAHAVGTYYKGRHIGAKGTAIFSFHAIKNITCAEGGLIVTDNENIARQLRMLKFHGLGVDAYDRQTWGRAPQAEVLTPGYKYNLTDINAAIALTQLAKLEHLNTRRREIAQQYQQALAALPFQPLSLPAWPHVHAWHLFIIRVDEQRCGISRDALMEALKERGIGTGLHFRAAHTQKYYRERFPSLSLPNTEWNSERICSLPLFPDMTTADADRVITALQQLAGQ.

N6-(pyridoxal phosphate)lysine is present on lysine 182.

The protein belongs to the DegT/DnrJ/EryC1 family. ArnB subfamily. As to quaternary structure, homodimer. Pyridoxal 5'-phosphate is required as a cofactor.

It catalyses the reaction UDP-4-amino-4-deoxy-beta-L-arabinose + 2-oxoglutarate = UDP-beta-L-threo-pentopyranos-4-ulose + L-glutamate. It functions in the pathway nucleotide-sugar biosynthesis; UDP-4-deoxy-4-formamido-beta-L-arabinose biosynthesis; UDP-4-deoxy-4-formamido-beta-L-arabinose from UDP-alpha-D-glucuronate: step 2/3. It participates in bacterial outer membrane biogenesis; lipopolysaccharide biosynthesis. Its function is as follows. Catalyzes the conversion of UDP-4-keto-arabinose (UDP-Ara4O) to UDP-4-amino-4-deoxy-L-arabinose (UDP-L-Ara4N). The modified arabinose is attached to lipid A and is required for resistance to polymyxin and cationic antimicrobial peptides. The protein is UDP-4-amino-4-deoxy-L-arabinose--oxoglutarate aminotransferase of Escherichia coli O157:H7.